The sequence spans 547 residues: Malolactic enzyme (547 aa).

Tyr92 acts as the Proton donor in catalysis. Lys165 functions as the Proton acceptor in the catalytic mechanism. Residue Lys165 participates in substrate binding. Glu236, Asp237, and Asp260 together coordinate Mn(2+). NAD(+) is bound by residues 293-296 (AGTA), Asn405, and Asn450. A substrate-binding site is contributed by Asn450.

Belongs to the malic enzymes family. Homodimer. Mn(2+) serves as cofactor. Requires NAD(+) as cofactor.

It carries out the reaction (S)-malate + H(+) = (S)-lactate + CO2. Its function is as follows. Involved in the malolactic fermentation (MLF) of wine, which results in a natural decrease in acidity and favorable changes in wine flavors. Catalyzes the decarboxylation of L-malate to L-lactate. The protein is Malolactic enzyme of Lactiplantibacillus plantarum (strain ATCC BAA-793 / NCIMB 8826 / WCFS1) (Lactobacillus plantarum).